The chain runs to 132 residues: Small ribosomal subunit protein uS11 (132 aa).

The protein belongs to the universal ribosomal protein uS11 family. As to quaternary structure, part of the 30S ribosomal subunit. Interacts with proteins S7 and S18. Binds to IF-3.

Located on the platform of the 30S subunit, it bridges several disparate RNA helices of the 16S rRNA. Forms part of the Shine-Dalgarno cleft in the 70S ribosome. In Cyanothece sp. (strain PCC 7425 / ATCC 29141), this protein is Small ribosomal subunit protein uS11.